The primary structure comprises 133 residues: ATP synthase epsilon chain, chloroplastic (133 aa).

It belongs to the ATPase epsilon chain family. F-type ATPases have 2 components, CF(1) - the catalytic core - and CF(0) - the membrane proton channel. CF(1) has five subunits: alpha(3), beta(3), gamma(1), delta(1), epsilon(1). CF(0) has three main subunits: a, b and c.

The protein localises to the plastid. The protein resides in the chloroplast thylakoid membrane. Its function is as follows. Produces ATP from ADP in the presence of a proton gradient across the membrane. This chain is ATP synthase epsilon chain, chloroplastic, found in Thalassiosira pseudonana (Marine diatom).